Here is a 131-residue protein sequence, read N- to C-terminus: Putative superoxide reductase (131 aa).

Fe cation is bound by residues glutamate 15, histidine 17, histidine 45, histidine 51, cysteine 115, and histidine 118.

The protein belongs to the desulfoferrodoxin family. It depends on Fe cation as a cofactor.

The enzyme catalyses reduced [rubredoxin] + superoxide + 2 H(+) = oxidized [rubredoxin] + H2O2. Functionally, uses electrons from reduced NADP, by way of rubredoxin and an oxidoreductase, to catalyze the reduction of superoxide to hydrogen peroxide. The chain is Putative superoxide reductase from Thermotoga maritima (strain ATCC 43589 / DSM 3109 / JCM 10099 / NBRC 100826 / MSB8).